A 493-amino-acid polypeptide reads, in one-letter code: DM7 family protein GM11958 (493 aa).

A disordered region spans residues 434–493; the sequence is ATKSTDTRDDGMNTADYQSQFPELEQDSEPEPEPEPEPQTEDEGEDEDIEILASLCSGSI. The span at 457 to 483 shows a compositional bias: acidic residues; it reads LEQDSEPEPEPEPEPQTEDEGEDEDIE.

It belongs to the DM7 family.

This chain is DM7 family protein GM11958, found in Drosophila sechellia (Fruit fly).